The sequence spans 414 residues: Phosphoglycerate kinase (414 aa).

Substrate-binding positions include 19 to 21 (DLN), Arg34, 57 to 60 (HQSK), Arg114, and Arg154. Residues Glu332 and 358 to 361 (GGHS) each bind ATP.

Belongs to the phosphoglycerate kinase family. Monomer.

Its subcellular location is the cytoplasm. The catalysed reaction is (2R)-3-phosphoglycerate + ATP = (2R)-3-phospho-glyceroyl phosphate + ADP. It functions in the pathway carbohydrate degradation; glycolysis; pyruvate from D-glyceraldehyde 3-phosphate: step 2/5. The chain is Phosphoglycerate kinase from Thermococcus onnurineus (strain NA1).